The primary structure comprises 217 residues: Small ribosomal subunit protein uS3 (217 aa).

The KH type-2 domain maps to 40 to 110; sequence IRDLINKWFN…EVYINIHEVR (71 aa).

The protein belongs to the universal ribosomal protein uS3 family. In terms of assembly, part of the 30S ribosomal subunit. Forms a tight complex with proteins S10 and S14.

Its function is as follows. Binds the lower part of the 30S subunit head. Binds mRNA in the 70S ribosome, positioning it for translation. The protein is Small ribosomal subunit protein uS3 of Rickettsia prowazekii (strain Madrid E).